Reading from the N-terminus, the 254-residue chain is Pyrroloquinoline-quinone synthase (254 aa).

It belongs to the PqqC family.

The enzyme catalyses 6-(2-amino-2-carboxyethyl)-7,8-dioxo-1,2,3,4,7,8-hexahydroquinoline-2,4-dicarboxylate + 3 O2 = pyrroloquinoline quinone + 2 H2O2 + 2 H2O + H(+). It functions in the pathway cofactor biosynthesis; pyrroloquinoline quinone biosynthesis. In terms of biological role, ring cyclization and eight-electron oxidation of 3a-(2-amino-2-carboxyethyl)-4,5-dioxo-4,5,6,7,8,9-hexahydroquinoline-7,9-dicarboxylic-acid to PQQ. This Rhodopseudomonas palustris (strain ATCC BAA-98 / CGA009) protein is Pyrroloquinoline-quinone synthase.